The primary structure comprises 285 residues: Membrane cofactor protein (285 aa).

Positions 1 to 34 (MAPPSRRECPFPSRRFPGLFLAALALLLSSRSDA) are cleaved as a signal peptide. Sushi domains lie at 35–96 (CGPP…PCVK), 97–159 (KVCH…ICQK), 160–225 (ILCK…ECKV), and 226–285 (VKCR…KCVK). 6 cysteine pairs are disulfide-bonded: Cys99/Cys141, Cys127/Cys157, Cys162/Cys210, Cys191/Cys223, Cys228/Cys270, and Cys256/Cys283. Residue Asn114 is glycosylated (N-linked (GlcNAc...) asparagine). 2 O-linked (GalNAc...) threonine glycosylation sites follow: Thr167 and Thr207.

As to quaternary structure, interacts with C3b. Interacts with C4b. Interacts with moesin/MSN. N-glycosylated. Probably less N-glycosylated in testis. Present in blood and sperm. Isoform 2, but not isoform 1, is present at the erythrocyte membrane (at protein level).

It is found in the cytoplasmic vesicle. Its subcellular location is the secretory vesicle. The protein resides in the acrosome inner membrane. In terms of biological role, acts as a cofactor for complement factor I, a serine protease which protects autologous cells against complement-mediated injury by cleaving C3b and C4b deposited on host tissue. May be involved in the fusion of the spermatozoa with the oocyte during fertilization. Also acts as a costimulatory factor for T-cells which induces the differentiation of CD4+ into T-regulatory 1 cells. T-regulatory 1 cells suppress immune responses by secreting interleukin-10, and therefore are thought to prevent autoimmunity. The polypeptide is Membrane cofactor protein (CD46) (Saimiri sciureus (Common squirrel monkey)).